Here is a 197-residue protein sequence, read N- to C-terminus: V-type ATP synthase subunit E 2 (197 aa).

It belongs to the V-ATPase E subunit family.

Its function is as follows. Produces ATP from ADP in the presence of a proton gradient across the membrane. This chain is V-type ATP synthase subunit E 2, found in Clostridium tetani (strain Massachusetts / E88).